A 386-amino-acid polypeptide reads, in one-letter code: Large ribosomal subunit protein uL4 (386 aa).

A compositionally biased stretch (basic and acidic residues) spans Val-341–Arg-357. The disordered stretch occupies residues Val-341–Lys-386. Positions Gly-369–Lys-386 are enriched in basic residues.

Belongs to the universal ribosomal protein uL4 family.

This chain is Large ribosomal subunit protein uL4 (RPL4), found in Urechis caupo (Innkeeper worm).